A 94-amino-acid chain; its full sequence is DNA-directed RNA polymerase subunit omega (94 aa).

The protein belongs to the RNA polymerase subunit omega family. As to quaternary structure, the RNAP catalytic core consists of 2 alpha, 1 beta, 1 beta' and 1 omega subunit. When a sigma factor is associated with the core the holoenzyme is formed, which can initiate transcription.

It catalyses the reaction RNA(n) + a ribonucleoside 5'-triphosphate = RNA(n+1) + diphosphate. Promotes RNA polymerase assembly. Latches the N- and C-terminal regions of the beta' subunit thereby facilitating its interaction with the beta and alpha subunits. This Tolumonas auensis (strain DSM 9187 / NBRC 110442 / TA 4) protein is DNA-directed RNA polymerase subunit omega.